The primary structure comprises 60 residues: Large ribosomal subunit protein bL33 (60 aa).

Belongs to the bacterial ribosomal protein bL33 family.

The protein is Large ribosomal subunit protein bL33 of Chlorobium phaeovibrioides (strain DSM 265 / 1930) (Prosthecochloris vibrioformis (strain DSM 265)).